A 528-amino-acid polypeptide reads, in one-letter code: Importin subunit alpha-2 (528 aa).

A compositionally biased stretch (low complexity) spans 1-15; sequence MADDSASPSPSSASP. The segment at 1 to 36 is disordered; it reads MADDSASPSPSSASPLQHHREALKSSVRNTAASRRR. ARM repeat units lie at residues 125 to 165, 167 to 206, 209 to 248, 253 to 292, 294 to 335, 338 to 383, 386 to 425, and 438 to 477; these read VPLV…NIAA, EPEE…NVAG, AELR…NLIK, KAAN…YLSA, SDRG…NLIA, DYMV…NIAA, FEHK…NLCV, and VEHL…LVMR.

It belongs to the importin alpha family. In terms of assembly, forms a complex with importin subunit beta-1. The whole complex, most stable and composed of importin alpha, importin beta and NLS substrate, is referred to as PTAC or pore targeting complex. As to expression, expressed in root, callus, and etiolated leaf. Low expression in green leaf.

Its subcellular location is the cytoplasm. The protein resides in the perinuclear region. Functionally, binds specifically and directly to substrates containing either a simple or bipartite NLS motif. Promotes docking of import substrates to the nuclear envelope. The polypeptide is Importin subunit alpha-2 (Oryza sativa subsp. japonica (Rice)).